Consider the following 443-residue polypeptide: Ribosomal protein uS12 methylthiotransferase RimO (443 aa).

An MTTase N-terminal domain is found at 10–120 (PRVGFVSLGC…VVKAVHQHLP (111 aa)). [4Fe-4S] cluster is bound by residues Cys19, Cys55, Cys84, Cys151, Cys155, and Cys158. Residues 137–375 (LTPAHYAYLK…DFQEDISTQR (239 aa)) form the Radical SAM core domain. The TRAM domain occupies 377-443 (ERWIGRDITV…VHDLYARPLP (67 aa)).

It belongs to the methylthiotransferase family. RimO subfamily. The cofactor is [4Fe-4S] cluster.

Its subcellular location is the cytoplasm. The enzyme catalyses L-aspartate(89)-[ribosomal protein uS12]-hydrogen + (sulfur carrier)-SH + AH2 + 2 S-adenosyl-L-methionine = 3-methylsulfanyl-L-aspartate(89)-[ribosomal protein uS12]-hydrogen + (sulfur carrier)-H + 5'-deoxyadenosine + L-methionine + A + S-adenosyl-L-homocysteine + 2 H(+). Functionally, catalyzes the methylthiolation of an aspartic acid residue of ribosomal protein uS12. The sequence is that of Ribosomal protein uS12 methylthiotransferase RimO from Aromatoleum aromaticum (strain DSM 19018 / LMG 30748 / EbN1) (Azoarcus sp. (strain EbN1)).